We begin with the raw amino-acid sequence, 284 residues long: Phosphatidylglycerol--prolipoprotein diacylglyceryl transferase (284 aa).

7 helical membrane-spanning segments follow: residues Ile-14–Ile-34, Tyr-62–Tyr-82, Phe-106–Tyr-126, Leu-136–Ile-156, Pro-190–Ala-210, Gly-218–Tyr-238, and Leu-252–Tyr-272. Arg-155 is an a 1,2-diacyl-sn-glycero-3-phospho-(1'-sn-glycerol) binding site.

Belongs to the Lgt family.

It localises to the cell inner membrane. The enzyme catalyses L-cysteinyl-[prolipoprotein] + a 1,2-diacyl-sn-glycero-3-phospho-(1'-sn-glycerol) = an S-1,2-diacyl-sn-glyceryl-L-cysteinyl-[prolipoprotein] + sn-glycerol 1-phosphate + H(+). Its pathway is protein modification; lipoprotein biosynthesis (diacylglyceryl transfer). In terms of biological role, catalyzes the transfer of the diacylglyceryl group from phosphatidylglycerol to the sulfhydryl group of the N-terminal cysteine of a prolipoprotein, the first step in the formation of mature lipoproteins. In Helicobacter pylori (strain Shi470), this protein is Phosphatidylglycerol--prolipoprotein diacylglyceryl transferase.